The sequence spans 157 residues: Small ribosomal subunit protein uS7 (157 aa).

This sequence belongs to the universal ribosomal protein uS7 family. In terms of assembly, part of the 30S ribosomal subunit. Contacts proteins S9 and S11.

Its function is as follows. One of the primary rRNA binding proteins, it binds directly to 16S rRNA where it nucleates assembly of the head domain of the 30S subunit. Is located at the subunit interface close to the decoding center, probably blocks exit of the E-site tRNA. The protein is Small ribosomal subunit protein uS7 of Chlamydia felis (strain Fe/C-56) (Chlamydophila felis).